A 212-amino-acid polypeptide reads, in one-letter code: Uridine kinase (212 aa).

13 to 20 (GGSGSGKT) lines the ATP pocket.

Belongs to the uridine kinase family.

The protein localises to the cytoplasm. The catalysed reaction is uridine + ATP = UMP + ADP + H(+). It carries out the reaction cytidine + ATP = CMP + ADP + H(+). It participates in pyrimidine metabolism; CTP biosynthesis via salvage pathway; CTP from cytidine: step 1/3. Its pathway is pyrimidine metabolism; UMP biosynthesis via salvage pathway; UMP from uridine: step 1/1. In Bacillus thuringiensis (strain Al Hakam), this protein is Uridine kinase.